Here is a 536-residue protein sequence, read N- to C-terminus: Ecdysone receptor (536 aa).

The interval 1–114 is modulating; sequence MKTENLIVTT…GPVPRQQEEL (114 aa). Residues 77 to 107 are disordered; the sequence is SPNSKLDDGNMSVHMGDGLDGKKSSSKKGPV. NR C4-type zinc fingers lie at residues 115–135 and 151–175; these read CLVCGDRASGYHYNALTCEGC and CKFGHECEMDMYMRRKCQECRLKKC. The segment at residues 115-187 is a DNA-binding region (nuclear receptor); sequence CLVCGDRASG…VGMRPECVVP (73 aa). Positions 278–514 constitute an NR LBD domain; sequence NQVAVIYKLI…FLEEVWDVGD (237 aa).

It belongs to the nuclear hormone receptor family. NR1 subfamily.

Its subcellular location is the nucleus. In terms of biological role, receptor for ecdysone. Binds to ecdysone response elements (ECRES). The protein is Ecdysone receptor (EcR) of Chironomus tentans (Midge).